The chain runs to 393 residues: Dual-specificity RNA methyltransferase RlmN (393 aa).

Residues 1-22 (MSEQLLSELSPVAATSPSPAPA) are disordered. Low complexity predominate over residues 10–22 (SPVAATSPSPAPA). Residue Glu114 is the Proton acceptor of the active site. Residues 120–358 (EDDRATLCVS…TTIVRKTRGD (239 aa)) enclose the Radical SAM core domain. An intrachain disulfide couples Cys127 to Cys364. Positions 134, 138, and 141 each coordinate [4Fe-4S] cluster. S-adenosyl-L-methionine is bound by residues 188–189 (GE), Ser220, 242–244 (SLH), and Asn321. Cys364 acts as the S-methylcysteine intermediate in catalysis.

The protein belongs to the radical SAM superfamily. RlmN family. [4Fe-4S] cluster serves as cofactor.

The protein localises to the cytoplasm. The enzyme catalyses adenosine(2503) in 23S rRNA + 2 reduced [2Fe-2S]-[ferredoxin] + 2 S-adenosyl-L-methionine = 2-methyladenosine(2503) in 23S rRNA + 5'-deoxyadenosine + L-methionine + 2 oxidized [2Fe-2S]-[ferredoxin] + S-adenosyl-L-homocysteine. It catalyses the reaction adenosine(37) in tRNA + 2 reduced [2Fe-2S]-[ferredoxin] + 2 S-adenosyl-L-methionine = 2-methyladenosine(37) in tRNA + 5'-deoxyadenosine + L-methionine + 2 oxidized [2Fe-2S]-[ferredoxin] + S-adenosyl-L-homocysteine. Functionally, specifically methylates position 2 of adenine 2503 in 23S rRNA and position 2 of adenine 37 in tRNAs. m2A2503 modification seems to play a crucial role in the proofreading step occurring at the peptidyl transferase center and thus would serve to optimize ribosomal fidelity. This is Dual-specificity RNA methyltransferase RlmN from Sodalis glossinidius (strain morsitans).